Here is a 357-residue protein sequence, read N- to C-terminus: Alanine racemase (357 aa).

Lysine 35 acts as the Proton acceptor; specific for D-alanine in catalysis. Lysine 35 bears the N6-(pyridoxal phosphate)lysine mark. Residue arginine 131 coordinates substrate. Tyrosine 256 functions as the Proton acceptor; specific for L-alanine in the catalytic mechanism. Methionine 304 serves as a coordination point for substrate.

The protein belongs to the alanine racemase family. It depends on pyridoxal 5'-phosphate as a cofactor.

It catalyses the reaction L-alanine = D-alanine. Its pathway is amino-acid biosynthesis; D-alanine biosynthesis; D-alanine from L-alanine: step 1/1. In terms of biological role, catalyzes the interconversion of L-alanine and D-alanine. May also act on other amino acids. This chain is Alanine racemase (alr), found in Legionella pneumophila (strain Paris).